The sequence spans 208 residues: N-(5'-phosphoribosyl)anthranilate isomerase (208 aa).

Belongs to the TrpF family.

The enzyme catalyses N-(5-phospho-beta-D-ribosyl)anthranilate = 1-(2-carboxyphenylamino)-1-deoxy-D-ribulose 5-phosphate. Its pathway is amino-acid biosynthesis; L-tryptophan biosynthesis; L-tryptophan from chorismate: step 3/5. The polypeptide is N-(5'-phosphoribosyl)anthranilate isomerase (Neisseria meningitidis serogroup B (strain ATCC BAA-335 / MC58)).